We begin with the raw amino-acid sequence, 485 residues long: Putative ATP-dependent RNA helicase ste13 (485 aa).

Residues 16-38 form a disordered region; that stretch reads DRESFKGQMKAQPVDMRPKTEDV. Positions 44 to 72 match the Q motif motif; sequence TEFEDYYLKRELLMGIFEAGFERPSPIQE. Residues 75–245 form the Helicase ATP-binding domain; it reads IPIALSGRDI…DKHLNKPYEI (171 aa). 88–95 contacts ATP; it reads AKNGTGKT. Positions 193 to 196 match the DEAD box motif; it reads DEAD. In terms of domain architecture, Helicase C-terminal spans 255–415; that stretch reads GVTQYYAFVD…PIPPSIDPSL (161 aa). The segment at 437-485 is disordered; sequence LAAQQAKGQEGYHNRPNNNRGGHPRGGGNRGGYRQSNRQPRYRGQQKAD.

Belongs to the DEAD box helicase family. DDX6/DHH1 subfamily.

It localises to the cytoplasm. It is found in the P-body. It carries out the reaction ATP + H2O = ADP + phosphate + H(+). ATP-dependent RNA helicase involved in mRNA turnover, and more specifically in mRNA decapping. Is involved in G1/S DNA-damage checkpoint recovery, probably through the regulation of the translational status of a subset of mRNAs. May also have a role in translation and mRNA nuclear export. The polypeptide is Putative ATP-dependent RNA helicase ste13 (ste13) (Schizosaccharomyces pombe (strain 972 / ATCC 24843) (Fission yeast)).